The chain runs to 1724 residues: Sperm flagellar protein 2 (1724 aa).

The 105-residue stretch at 1–105 folds into the Calponin-homology (CH) domain; it reads MSEILCQWLN…LLYQLYIALQ (105 aa). Coiled-coil stretches lie at residues 170 to 203 and 255 to 351; these read KAIE…KDLQ and RRLL…REKE. The interval 545–576 is disordered; sequence HERQKSGKTPPTQEDDKRDPVVNQEKVSKTQD. The span at 558-576 shows a compositional bias: basic and acidic residues; that stretch reads EDDKRDPVVNQEKVSKTQD. A coiled-coil region spans residues 665–691; that stretch reads NQAKLLEEALTGYKRKFLQLKKKKEQM. The interval 828 to 910 is disordered; sequence EEKETEKKAG…PTAPPPPKAG (83 aa). The segment covering 853–862 has biased composition (basic and acidic residues); sequence EAEKDKELHQ. A coiled-coil region spans residues 995–1021; the sequence is EDLWEDEETKAELHQRVNDLRDRLWDI. Residues 1177–1194 are compositionally biased toward basic and acidic residues; it reads RLTEEEKEPPQLDSKEKS. Disordered regions lie at residues 1177-1241, 1580-1618, and 1704-1724; these read RLTE…EMAE, VSPI…NANT, and SEHA…DEKK. A compositionally biased stretch (basic residues) spans 1210–1221; sequence PKKKKTDKKGKG. The interval 1228–1580 is interaction with IFT20; sequence EVSPVTVTPE…MAEKTSISTV (353 aa). The span at 1592-1607 shows a compositional bias: basic and acidic residues; sequence SSAKEDRELKEEKDDQ.

In terms of assembly, interacts (via C-terminus) with IFT20. Interacts with DYNC1I2. In terms of tissue distribution, highly expressed in testis, where it primarily localizes to late spermatocytes, round spermatids and elongating spermatids (at protein level). Found in Sertoli cells of the testis (at protein level). Expressed at lower levels in epididymis (at protein level). Detected in lung, brain, liver and kidney. Also detected in bone, cartilage, trachea, pituitary gland and eye. Expressed in osteoblasts and chondrocytes.

It is found in the cell projection. The protein resides in the cilium. It localises to the flagellum. Its subcellular location is the cytoplasm. The protein localises to the cytoskeleton. It is found in the golgi apparatus. Functionally, required for correct axoneme development in spermatozoa. Important for normal development of the manchette and sperm head morphology. Essential for male fertility. Plays a role in localization of the intraflagellar transport protein IFT20 to the manchette, suggesting function as an adapter for dynein-mediated protein transport during spermatogenesis. Also plays a role in bone growth where it seems to be required for normal osteoblast differentiation. This is Sperm flagellar protein 2 (Spef2) from Mus musculus (Mouse).